Here is a 605-residue protein sequence, read N- to C-terminus: Tegument protein UL47 homolog (605 aa).

Residues 1–75 form a disordered region; sequence MATDNARPRS…DPWKLEPAND (75 aa). The span at 8-17 shows a compositional bias: basic residues; sequence PRSRSLRRKS. Over residues 54-69 the composition is skewed to basic and acidic residues; it reads GADRDPGTRRGIDPWK.

Belongs to the alphaherpesvirinae HHV-1 UL47 family. In terms of assembly, interacts with US3 kinase. Interacts with UL31 and UL34; these interactions seem important for efficient virion nuclear egress. Interacts with UL41/VHS. Phosphorylated by US3. This phosphorylation is required for proper nuclear localization.

The protein localises to the virion tegument. It localises to the host nucleus. Its subcellular location is the host cytoplasm. Its function is as follows. Tegument protein that can bind to various RNA transcripts. Plays a role in the attenuation of selective viral and cellular mRNA degradation by modulating the activity of host shutoff RNase UL41/VHS. Also plays a role in the primary envelopment of virions in the perinuclear space, probably by interacting with two nuclear egress proteins UL31 and UL34. In Amazona oratrix (yellow-headed parrot), this protein is Tegument protein UL47 homolog (sORF1).